A 308-amino-acid polypeptide reads, in one-letter code: Homoserine O-acetyltransferase (308 aa).

The active-site Acyl-thioester intermediate is the Cys-142. Substrate is bound by residues Lys-163 and Ser-192. Catalysis depends on His-235, which acts as the Proton acceptor. The active site involves Glu-237. Arg-249 is a substrate binding site.

The protein belongs to the MetA family.

It is found in the cytoplasm. It catalyses the reaction L-homoserine + acetyl-CoA = O-acetyl-L-homoserine + CoA. The protein operates within amino-acid biosynthesis; L-methionine biosynthesis via de novo pathway; O-acetyl-L-homoserine from L-homoserine: step 1/1. In terms of biological role, transfers an acetyl group from acetyl-CoA to L-homoserine, forming acetyl-L-homoserine. This chain is Homoserine O-acetyltransferase, found in Rhizobium rhizogenes (strain K84 / ATCC BAA-868) (Agrobacterium radiobacter).